The chain runs to 222 residues: Formimidoylglutamase (222 aa).

6 residues coordinate Mn(2+): His34, Asp59, His61, Asp63, Asp150, and Asp152.

Belongs to the arginase family. It depends on Mn(2+) as a cofactor.

The enzyme catalyses N-formimidoyl-L-glutamate + H2O = formamide + L-glutamate. It functions in the pathway amino-acid degradation; L-histidine degradation into L-glutamate; L-glutamate from N-formimidoyl-L-glutamate (hydrolase route): step 1/1. Catalyzes the conversion of N-formimidoyl-L-glutamate to L-glutamate and formamide. In Klebsiella aerogenes (Enterobacter aerogenes), this protein is Formimidoylglutamase (hutG).